A 219-amino-acid chain; its full sequence is NAD(P)H-quinone oxidoreductase subunit I (219 aa).

4Fe-4S ferredoxin-type domains lie at 55-84 (GRIHYEFDKCIACEVCVRVCPINLPVVDWV) and 95-124 (RNYSIDFGVCIFCGNCVEYCPTNCLSMTEE). [4Fe-4S] cluster-binding residues include cysteine 64, cysteine 67, cysteine 70, cysteine 74, cysteine 104, cysteine 107, cysteine 110, and cysteine 114. The tract at residues 192-219 (LKAAGSMKAAEDERESSSSASNMEESAG) is disordered. Low complexity predominate over residues 208 to 219 (SSSASNMEESAG).

It belongs to the complex I 23 kDa subunit family. As to quaternary structure, NDH-1 is composed of at least 11 different subunits. [4Fe-4S] cluster serves as cofactor.

Its subcellular location is the cellular thylakoid membrane. It carries out the reaction a plastoquinone + NADH + (n+1) H(+)(in) = a plastoquinol + NAD(+) + n H(+)(out). The enzyme catalyses a plastoquinone + NADPH + (n+1) H(+)(in) = a plastoquinol + NADP(+) + n H(+)(out). Its function is as follows. NDH-1 shuttles electrons from an unknown electron donor, via FMN and iron-sulfur (Fe-S) centers, to quinones in the respiratory and/or the photosynthetic chain. The immediate electron acceptor for the enzyme in this species is believed to be plastoquinone. Couples the redox reaction to proton translocation, and thus conserves the redox energy in a proton gradient. The sequence is that of NAD(P)H-quinone oxidoreductase subunit I from Synechococcus sp. (strain CC9311).